We begin with the raw amino-acid sequence, 157 residues long: S-ribosylhomocysteine lyase (157 aa).

3 residues coordinate Fe cation: H54, H58, and C124.

Belongs to the LuxS family. Homodimer. It depends on Fe cation as a cofactor.

The catalysed reaction is S-(5-deoxy-D-ribos-5-yl)-L-homocysteine = (S)-4,5-dihydroxypentane-2,3-dione + L-homocysteine. Its function is as follows. Involved in the synthesis of autoinducer 2 (AI-2) which is secreted by bacteria and is used to communicate both the cell density and the metabolic potential of the environment. The regulation of gene expression in response to changes in cell density is called quorum sensing. Catalyzes the transformation of S-ribosylhomocysteine (RHC) to homocysteine (HC) and 4,5-dihydroxy-2,3-pentadione (DPD). This chain is S-ribosylhomocysteine lyase, found in Oenococcus oeni (strain ATCC BAA-331 / PSU-1).